The chain runs to 45 residues: uncharacterized protein (45 aa).

Belongs to the asfivirus C62L family.

This is an uncharacterized protein from Ornithodoros (relapsing fever ticks).